We begin with the raw amino-acid sequence, 98 residues long: uncharacterized protein (98 aa).

Belongs to the HesB/IscA family.

This is an uncharacterized protein from Staphylococcus epidermidis (strain ATCC 35984 / DSM 28319 / BCRC 17069 / CCUG 31568 / BM 3577 / RP62A).